A 63-amino-acid chain; its full sequence is DNA-directed RNA polymerase 7 kDa subunit (63 aa).

Belongs to the poxviridae DNA-directed RNA polymerase 7 kDa subunit family. The DNA-dependent RNA polymerase used for intermediate and late genes expression consists of eight subunits 147 kDa, 133 kDa, 35 kDa, 30 kDa, 22 kDa, 19 kDa, 18 kDa and 7 kDa totalling more than 500 kDa in mass. The same holoenzyme, with the addition of the transcription-specificity factor RAP94, is used for early gene expression.

The protein resides in the virion. It catalyses the reaction RNA(n) + a ribonucleoside 5'-triphosphate = RNA(n+1) + diphosphate. Functionally, part of the DNA-dependent RNA polymerase which catalyzes the transcription of viral DNA into RNA using the four ribonucleoside triphosphates as substrates. Responsible for the transcription of early, intermediate and late genes. DNA-dependent RNA polymerase associates with the early transcription factor (ETF) thereby allowing the early genes transcription. Late transcription, and probably also intermediate transcription, require newly synthesized RNA polymerase. The protein is DNA-directed RNA polymerase 7 kDa subunit (RPO7) of Molluscum contagiosum virus subtype 1 (MOCV).